Reading from the N-terminus, the 708-residue chain is UvrABC system protein B (708 aa).

Residues 32 to 419 enclose the Helicase ATP-binding domain; that stretch reads EGIQSGKTAQ…GGEVVEQIIR (388 aa). 45 to 52 is an ATP binding site; that stretch reads GATGTGKT. The Beta-hairpin signature appears at 98–121; sequence YYDYYQPEAYIPQRDVYIEKDSSI. The region spanning 436–598 is the Helicase C-terminal domain; it reads QVTHLLEQVR…IVPKTVRKSI (163 aa). The region spanning 627–662 is the UVR domain; that stretch reads IEYVDKLEQEMLAAAEDLEFERAARLRDRVLQLKEH. The tract at residues 668–708 is disordered; it reads SEVEIVDEKSAGKSGGRGRGRRGAKKKGASKGTKIPRPKRG. Residues 683–708 are compositionally biased toward basic residues; that stretch reads GRGRGRRGAKKKGASKGTKIPRPKRG.

Belongs to the UvrB family. In terms of assembly, forms a heterotetramer with UvrA during the search for lesions. Interacts with UvrC in an incision complex.

The protein localises to the cytoplasm. Its function is as follows. The UvrABC repair system catalyzes the recognition and processing of DNA lesions. A damage recognition complex composed of 2 UvrA and 2 UvrB subunits scans DNA for abnormalities. Upon binding of the UvrA(2)B(2) complex to a putative damaged site, the DNA wraps around one UvrB monomer. DNA wrap is dependent on ATP binding by UvrB and probably causes local melting of the DNA helix, facilitating insertion of UvrB beta-hairpin between the DNA strands. Then UvrB probes one DNA strand for the presence of a lesion. If a lesion is found the UvrA subunits dissociate and the UvrB-DNA preincision complex is formed. This complex is subsequently bound by UvrC and the second UvrB is released. If no lesion is found, the DNA wraps around the other UvrB subunit that will check the other stand for damage. This is UvrABC system protein B from Rhodopirellula baltica (strain DSM 10527 / NCIMB 13988 / SH1).